Reading from the N-terminus, the 543-residue chain is MRVAASALLAGAASAAVAPQQQILKFPSSFSELKEDLWSKPLHNLEESLKSLTGEAKATWDEVATMYPESFDKAAFFSTPKPHTRKHDSEWDHIVKGADVQSVWVENAQGEKEREIDGKLEQFDLRVKKVDPSVLGVDKVKQYSGYLDDNEEDKHLFYWFFESRNDPKNDPVVLWLNGGPGCSSLMGLFMELGPASVMKDGKLKHNDYSWNANASVIFLDQPVNVGYSYSSGSVSNTVAAGKDIYALLTLFFKQFPEYSKQPFHISGESYAGHYIPVFASEILSHKKRNINLQSVLIGNGLTDGLTQYEYYRPMACGEGGWPAVLDESSCQAMDNAYPRCASLIENCYKSESVWSCVPASIYCNNAMIGPYQRTGQNVYDVRRPCGDNQLCYDEIDYISAFLNKKEVMKAVGAEVSSYDSCNFDINRNFLLQGDWMKPYHRVVPGLLEEIPVLVYAGDADYICNWLGNKAWTEALEWKGHEEYKKAEMKDFKIDGDGKKVGEVKSSGNFTFMKIHAGGHMVPFDQPEASLEMVNRWLSGEFWE.

Positions 1–17 are cleaved as a signal peptide; it reads MRVAASALLAGAASAAV. A propeptide spanning residues 18–128 is cleaved from the precursor; it reads APQQQILKFP…KLEQFDLRVK (111 aa). 5 disulfides stabilise this stretch: C182-C421, C316-C330, C340-C363, C347-C356, and C385-C391. N213 carries N-linked (GlcNAc...) asparagine glycosylation. Residue S269 is part of the active site. D460 is an active-site residue. Residue N508 is glycosylated (N-linked (GlcNAc...) asparagine). Residue H519 is part of the active site.

It belongs to the peptidase S10 family.

The protein localises to the vacuole. The enzyme catalyses Release of a C-terminal amino acid with broad specificity.. Its function is as follows. Vacuolar carboxypeptidase involved in degradation of small peptides. Digests preferentially peptides containing an aliphatic or hydrophobic residue in P1' position, as well as methionine, leucine or phenylalanine in P1 position of ester substrate. The polypeptide is Carboxypeptidase Y homolog A (CPYA) (Phaeosphaeria nodorum (strain SN15 / ATCC MYA-4574 / FGSC 10173) (Glume blotch fungus)).